A 274-amino-acid polypeptide reads, in one-letter code: Putative homeobox protein Meis3-like 1 (274 aa).

Residues 12–65 (GGDVCSSDSFNEDNTAFAKQVRSERPFFSSNPELDNLMIQAIQVLRFHLLELEK) form the MEIS N-terminal domain. 2 disordered regions span residues 108–167 (DSGS…KRGI) and 228–248 (NRTG…GYTE). Positions 123–135 (GLASQSGDNSSDQ) are enriched in polar residues. The homeobox DNA-binding region spans 161-223 (RNKKRGIFPK…NARRRIVQPM (63 aa)).

Belongs to the TALE/MEIS homeobox family.

Its subcellular location is the nucleus. The polypeptide is Putative homeobox protein Meis3-like 1 (MEIS3P1) (Homo sapiens (Human)).